A 1334-amino-acid chain; its full sequence is Adenylate cyclase type 9 (1334 aa).

Disordered stretches follow at residues 1–28 and 49–71; these read MASP…SNSV and ISSS…GLRR. The Cytoplasmic portion of the chain corresponds to 1-113; sequence MASPPHQQLL…CFPQTQRRFR (113 aa). Residues 16–28 show a composition bias toward polar residues; sequence EVSCDSSGDSNSV. The segment covering 57-69 has biased composition (gly residues); sequence ESGGVGRGGGGGL. A helical membrane pass occupies residues 114–134; the sequence is YALFYIGSACLLWGIYFGVHM. Over 135–137 the chain is Extracellular; that stretch reads REK. A helical membrane pass occupies residues 138 to 158; sequence QMVFMVPALCFLLVCVAFFAF. Topologically, residues 159 to 167 are cytoplasmic; it reads TFTKAYARR. A helical transmembrane segment spans residues 168 to 187; sequence YVWTSGYTLLVFALTLAPQF. Topologically, residues 188–207 are extracellular; it reads QPWTLGERQRVQPRPAAPVD. Residues 208–227 traverse the membrane as a helical segment; it reads TCLSQVGSFSMCVEVLLLLY. Residues 228 to 233 lie on the Cytoplasmic side of the membrane; the sequence is TVMHLP. Residues 234–250 form a helical membrane-spanning segment; that stretch reads LYLSLFLGLSYSVLFET. Residues 251 to 269 are Extracellular-facing; that stretch reads SAFRDESCTLLGGGAVYWE. A helical membrane pass occupies residues 270–290; that stretch reads LLSKAFLHVCIHAIGIHLFIM. Topologically, residues 291-768 are cytoplasmic; the sequence is SEVRSRSTFL…VKTFASATFS (478 aa). Residues 338–363 are disordered; the sequence is QGDDESENSVKRHSTSSPKNRKKKPS. The segment covering 348-363 has biased composition (basic residues); that stretch reads KRHSTSSPKNRKKKPS. 3 residues coordinate Mg(2+): D388, I389, and D432. ATP is bound by residues 388-393, 430-432, and R476; these read DIVGFT and LGD. The segment at 635 to 670 is disordered; it reads GCQDEHKNSTKAPGGHSPKTQNGLLSPPQEEKLSNS. The helical transmembrane segment at 769-789 threads the bilayer; sequence SLLDVFLSTTVFLILSVTCFL. Residues 790 to 800 are Extracellular-facing; the sequence is KHGMVASPPPP. The helical transmembrane segment at 801–821 threads the bilayer; sequence AAVVVFVIAILLEVLSLVISV. The Cytoplasmic portion of the chain corresponds to 822–849; that stretch reads RMVFFLEEVMACTKRLLELISGWLPRHF. Residues 850–870 traverse the membrane as a helical segment; it reads LGAILVSLPALAVFSHFTSDF. The Extracellular segment spans residues 871–873; that stretch reads ETN. The chain crosses the membrane as a helical span at residues 874 to 894; that stretch reads IHYTMFMCCAILIAIVQYCNF. The Cytoplasmic portion of the chain corresponds to 895–902; that stretch reads CQLSSWMR. Residues 903–923 traverse the membrane as a helical segment; sequence SLLATVVGAVLLILLYVSLCP. Residues 924–957 lie on the Extracellular side of the membrane; sequence DSSVETLHLDLAQNLSSRKSPCNSSMPADVKRPA. N-linked (GlcNAc...) asparagine glycosylation is found at N937 and N946. The chain crosses the membrane as a helical span at residues 958–978; that stretch reads DLIGQEVILAVFLLLLLVWFL. The Cytoplasmic portion of the chain corresponds to 979–1334; it reads NRSFEVSYRL…LTKLNVSKSV (356 aa). ATP-binding positions include K1090, 1167-1169, 1174-1178, and K1214; these read DIW and NIASR. Positions 1266–1303 are disordered; sequence SVQNSDKTAHATDNSETKDALPSSKKLQKEPTKAEERC. 2 stretches are compositionally biased toward basic and acidic residues: residues 1272–1284 and 1292–1303; these read KTAH…ETKD and LQKEPTKAEERC.

Belongs to the adenylyl cyclase class-4/guanylyl cyclase family. Mg(2+) is required as a cofactor. Requires Mn(2+) as cofactor. Detected in embryonic heart (at protein level).

It localises to the cell membrane. The protein resides in the membrane. The enzyme catalyses ATP = 3',5'-cyclic AMP + diphosphate. With respect to regulation, insensitive to calcium/calmodulin, forskolin and somatostatin. Stimulated by beta-adrenergic receptor activation. Activity is down-regulated by calcium/calcineurin. Adenylyl cyclase that catalyzes the formation of the signaling molecule cAMP in response to activation of G protein-coupled receptors. The sequence is that of Adenylate cyclase type 9 (ADCY9) from Gallus gallus (Chicken).